The sequence spans 530 residues: Na(+)/H(+) antiporter NhaB (530 aa).

Helical transmembrane passes span 13–33 (FLGQ…LINP), 67–87 (PGGL…ETVL), 90–110 (VVGN…IYFL), 138–158 (AAAL…VIAV), 205–225 (LLMH…VGEP), 245–265 (MAPI…FLEF), 302–333 (LVIQ…VIIL), 350–370 (FEEA…VAVI), 449–469 (VATP…LAPL), and 477–497 (MVIM…VMTA).

The protein belongs to the NhaB Na(+)/H(+) (TC 2.A.34) antiporter family.

Its subcellular location is the cell inner membrane. It carries out the reaction 2 Na(+)(in) + 3 H(+)(out) = 2 Na(+)(out) + 3 H(+)(in). Its function is as follows. Na(+)/H(+) antiporter that extrudes sodium in exchange for external protons. The protein is Na(+)/H(+) antiporter NhaB of Alcanivorax borkumensis (strain ATCC 700651 / DSM 11573 / NCIMB 13689 / SK2).